Here is a 2697-residue protein sequence, read N- to C-terminus: Target of rapamycin homolog (2697 aa).

The tract at residues 1-25 (MLQQHGISFQMNADRQNKAATTSNR) is disordered. HEAT repeat units lie at residues 235–272 (LRVN…IVSQ), 649–687 (QTIY…PFLA), 689–726 (LAQP…LNPA), 731–768 (RLRL…QSPK), 815–853 (KNLK…STAY), 863–900 (SLLD…YTHK), and 1073–1110 (KYTG…LTHC). Residues 1438 to 2153 (VLGRWAEQTK…IYALTVASRS (716 aa)) enclose the FAT domain. 2 disordered regions span residues 1945–1981 (TVIS…PQPA) and 2017–2039 (SNSS…PSNS). Residues 1969–1981 (SPPPPAQKSPQPA) show a composition bias toward pro residues. Polar residues predominate over residues 2030–2039 (PLSNDSPSNS). One can recognise a PI3K/PI4K catalytic domain in the interval 2332-2647 (FSSKMNVITS…TTDSIMETIK (316 aa)). The interval 2338–2344 (VITSKQR) is G-loop. Positions 2512–2520 (GLGDRHPSN) are catalytic loop. Residues 2532 to 2557 (HIDFGDCFEVAMLREKFPERVPFRLT) are activation loop. The segment at 2615-2635 (DPKTRKDTGGRQNMAGAVLPS) is disordered. Residues 2665 to 2697 (EPLQVTEQLAMLTEQATSPLNLCQSYIGWCPFW) form the FATC domain.

Belongs to the PI3/PI4-kinase family. In terms of tissue distribution, ubiquitous. Expressed in all major tissues and organs, including the intestine, gonads and hypodermal cells. Expressed in neurons.

Its subcellular location is the nucleus. The enzyme catalyses L-seryl-[protein] + ATP = O-phospho-L-seryl-[protein] + ADP + H(+). It catalyses the reaction L-threonyl-[protein] + ATP = O-phospho-L-threonyl-[protein] + ADP + H(+). Functionally, serine/threonine-protein kinase that regulates the mRNA translation machinery, probably by modulating the activity of translation factors such as eIF-4G and eIF-2. It may have some protein kinase activity instead of lipid kinase activity. May play a role in P-granule degradation by autophagy in somatic cells during embryogenesis. Required, during larval development, for the establishment of the proper number of germline progenitors, probably upstream of rsks-1 and ife-1. Required for larval development. May act as a mediator of lifespan regulation by insulin signaling and nutrient sensing. The sequence is that of Target of rapamycin homolog from Caenorhabditis elegans.